Consider the following 355-residue polypeptide: Chromosomal protein D1 (355 aa).

An N-acetylmethionine modification is found at Met-1. The segment at 1-355 (MEEVAVKKRG…NYNDSESVAA (355 aa)) is disordered. Positions 7–14 (KKRGRPSK) form a DNA-binding region, a.T hook 1. At Ser-30 the chain carries Phosphoserine. DNA-binding regions (a.T hook) lie at residues 34-41 (KKRGRPAK) and 60-67 (KIQNDEDP). The span at 64 to 77 (DEDPEDEGEEDGDG) shows a compositional bias: acidic residues. Ser-80, Ser-88, and Ser-89 each carry phosphoserine. A DNA-binding region (a.T hook 4) is located at residues 94–101 (KGRGRPKS). Phosphoserine is present on residues Ser-107, Ser-109, and Ser-112. Thr-115 bears the Phosphothreonine mark. Ser-118 carries the post-translational modification Phosphoserine. A compositionally biased stretch (basic residues) spans 119 to 130 (AKKRKAGRPKKH). Positions 122-129 (RKAGRPKK) form a DNA-binding region, a.T hook 5. Residues Ser-133 and Ser-135 each carry the phosphoserine; by CK2 modification. Residues 135–147 (SENEDDQDEDDDG) are compositionally biased toward acidic residues. Phosphoserine is present on residues Ser-149, Ser-150, Ser-161, Ser-164, and Ser-170. The a.T hook 6 DNA-binding region spans 155–162 (RPVGRPSA). The a.T hook 7 DNA-binding region spans 174–181 (RGLGRPKK). At Ser-186 the chain carries Phosphoserine; by CK2. Residues 196-203 (KKRGRPPQ) constitute a DNA-binding region (a.T hook 8). Ser-208 is modified (phosphoserine). The segment at residues 219–226 (RPRGRPKA) is a DNA-binding region (a.T hook 9). Acidic residues predominate over residues 237 to 247 (NDDDQDDENSG). 3 positions are modified to phosphoserine: Ser-246, Ser-252, and Ser-253. 2 DNA-binding regions (a.T hook) span residues 262–269 (KKRGRPSL) and 281–288 (KPRSRPAK). Phosphoserine occurs at positions 299 and 307. Residues 307-318 (SKKESNDEDRAV) are compositionally biased toward basic and acidic residues. The residue at position 311 (Ser-311) is a Phosphoserine; by CK2. At Thr-321 the chain carries Phosphothreonine. The residue at position 332 (Ser-332) is a Phosphoserine; by CK2. Residues 345–355 (DNYNDSESVAA) are compositionally biased toward polar residues.

The protein resides in the nucleus. It localises to the chromosome. Functionally, this satellite DNA-associated protein is a double-stranded DNA binding protein specific for tracts of pure at DNA. It may play a role in organizing the higher-order structure of euchromatin as well as heterochromatin. The sequence is that of Chromosomal protein D1 (D1) from Drosophila melanogaster (Fruit fly).